We begin with the raw amino-acid sequence, 112 residues long: Putative pterin-4-alpha-carbinolamine dehydratase (112 aa).

The protein belongs to the pterin-4-alpha-carbinolamine dehydratase family.

The catalysed reaction is (4aS,6R)-4a-hydroxy-L-erythro-5,6,7,8-tetrahydrobiopterin = (6R)-L-erythro-6,7-dihydrobiopterin + H2O. The protein is Putative pterin-4-alpha-carbinolamine dehydratase of Shewanella putrefaciens (strain CN-32 / ATCC BAA-453).